A 620-amino-acid polypeptide reads, in one-letter code: Glutathione-regulated potassium-efflux system protein KefC (620 aa).

Residues 1-3 (MDS) lie on the Periplasmic side of the membrane. Residues 4 to 24 (HTLVQALIYLGSAALIVPIAV) form a helical membrane-spanning segment. A topological domain (cytoplasmic) is located at residue Arg-25. A helical membrane pass occupies residues 26–46 (LGLGSVLGYLIAGCIIGPWGL). Over 47-53 (RLVTDAE) the chain is Periplasmic. The helical transmembrane segment at 54–74 (SILHFAEIGVVLMLFIIGLEL) threads the bilayer. The Cytoplasmic portion of the chain corresponds to 75–89 (DPQRLWKLRAAVFGG). A helical membrane pass occupies residues 90 to 110 (GALQMVICGGLLGLFCMLLGL). The Periplasmic segment spans residues 111–113 (RWQ). A helical transmembrane segment spans residues 114–134 (VAELIGMTLALSSTAIAMQAM). Over 135 to 148 (NERNLMVTQMGRSA) the chain is Cytoplasmic. The helical transmembrane segment at 149-169 (FAVLLFQDIAAIPLVAMIPLL) threads the bilayer. Residues 170 to 177 (AASSASTT) are Periplasmic-facing. The chain crosses the membrane as a helical span at residues 178–198 (MGAFALSALKVAGALVLVVLL). Residues 199–213 (GRYVTRPALRFVARS) are Cytoplasmic-facing. The helical transmembrane segment at 214–233 (GLREVFSAVALFLVFGFGLL) threads the bilayer. Topologically, residues 234–236 (LEE) are periplasmic. The helical transmembrane segment at 237 to 254 (VGLSMAMGAFLAGVLLAS) threads the bilayer. Over 255-269 (SEYRHALESDIEPFK) the chain is Cytoplasmic. A helical transmembrane segment spans residues 270-290 (GLLLGLFFIGVGMSIDFGTLI). Residues 291-293 (ENP) are Periplasmic-facing. A helical membrane pass occupies residues 294–314 (LRIVILLLGFLIIKIAMLWLI). The Cytoplasmic segment spans residues 315–326 (ARPLQVPNKQRR). Residues 327–347 (WFAVLLGQGSEFAFVVFGAAQ) traverse the membrane as a helical segment. Residues 348 to 358 (MANVLEPEWAK) are Periplasmic-facing. Residues 359-379 (SLTLAVALSMAATPILLVILN) form a helical membrane-spanning segment. Over 380–620 (RLEQSSTEEA…ADEPETKPSS (241 aa)) the chain is Cytoplasmic. The RCK N-terminal domain maps to 399-518 (QPRVIIAGFG…AGVEKPERET (120 aa)). Residues 597-620 (GWQGTEEGKHTGNMADEPETKPSS) are disordered.

The protein belongs to the monovalent cation:proton antiporter 2 (CPA2) transporter (TC 2.A.37) family. KefC subfamily. As to quaternary structure, homodimer. Interacts with the regulatory subunit KefF.

The protein resides in the cell inner membrane. Its function is as follows. Pore-forming subunit of a potassium efflux system that confers protection against electrophiles. Catalyzes K(+)/H(+) antiport. This is Glutathione-regulated potassium-efflux system protein KefC from Escherichia coli O157:H7.